Reading from the N-terminus, the 510-residue chain is GTPase Der (510 aa).

EngA-type G domains lie at 3–166 (PVVA…ATAL) and 220–393 (IKIA…ACAT). GTP-binding positions include 9 to 16 (GRPNVGKS), 56 to 60 (DTGGI), 118 to 121 (NKTD), 226 to 233 (GRPNVGKS), 273 to 277 (DTAGV), and 338 to 341 (NKWD). The region spanning 394–478 (QKTSTSMLTR…PIRIQFQEGN (85 aa)) is the KH-like domain.

This sequence belongs to the TRAFAC class TrmE-Era-EngA-EngB-Septin-like GTPase superfamily. EngA (Der) GTPase family. As to quaternary structure, associates with the 50S ribosomal subunit.

In terms of biological role, GTPase that plays an essential role in the late steps of ribosome biogenesis. The polypeptide is GTPase Der (Haemophilus ducreyi (strain 35000HP / ATCC 700724)).